An 84-amino-acid polypeptide reads, in one-letter code: Esculentin-1B (84 aa).

A signal peptide spans 1–22 (MFTLKKPLLLIVLLGMISLSLC). A propeptide spanning residues 23–38 (EQERNADEEEGSEIKR) is cleaved from the precursor. An intrachain disulfide couples Cys78 to Cys84.

This sequence belongs to the frog skin active peptide (FSAP) family. Brevinin subfamily. As to expression, expressed by the skin glands.

It localises to the secreted. Shows antibacterial activity against representative Gram-negative and Gram-positive bacterial species, and hemolytic activity. The protein is Esculentin-1B of Pelophylax lessonae (Pool frog).